The chain runs to 448 residues: Probable glycine dehydrogenase (decarboxylating) subunit 1 (448 aa).

It belongs to the GcvP family. N-terminal subunit subfamily. The glycine cleavage system is composed of four proteins: P, T, L and H. In this organism, the P 'protein' is a heterodimer of two subunits.

The catalysed reaction is N(6)-[(R)-lipoyl]-L-lysyl-[glycine-cleavage complex H protein] + glycine + H(+) = N(6)-[(R)-S(8)-aminomethyldihydrolipoyl]-L-lysyl-[glycine-cleavage complex H protein] + CO2. Its function is as follows. The glycine cleavage system catalyzes the degradation of glycine. The P protein binds the alpha-amino group of glycine through its pyridoxal phosphate cofactor; CO(2) is released and the remaining methylamine moiety is then transferred to the lipoamide cofactor of the H protein. The sequence is that of Probable glycine dehydrogenase (decarboxylating) subunit 1 from Staphylococcus carnosus (strain TM300).